A 140-amino-acid polypeptide reads, in one-letter code: Nucleoside diphosphate kinase (140 aa).

Positions 11, 59, 87, 93, 104, and 114 each coordinate ATP. Residue H117 is the Pros-phosphohistidine intermediate of the active site.

This sequence belongs to the NDK family. In terms of assembly, homotetramer. It depends on Mg(2+) as a cofactor.

It is found in the cytoplasm. The enzyme catalyses a 2'-deoxyribonucleoside 5'-diphosphate + ATP = a 2'-deoxyribonucleoside 5'-triphosphate + ADP. It carries out the reaction a ribonucleoside 5'-diphosphate + ATP = a ribonucleoside 5'-triphosphate + ADP. Its function is as follows. Major role in the synthesis of nucleoside triphosphates other than ATP. The ATP gamma phosphate is transferred to the NDP beta phosphate via a ping-pong mechanism, using a phosphorylated active-site intermediate. The sequence is that of Nucleoside diphosphate kinase from Gluconacetobacter diazotrophicus (strain ATCC 49037 / DSM 5601 / CCUG 37298 / CIP 103539 / LMG 7603 / PAl5).